A 242-amino-acid polypeptide reads, in one-letter code: MRAKTTSRHHNVDEQEIAKFEAVASRWWDLEGEFKPLHRINPLRLNYILQRSGGIFEKKVLDVGCGGGILAESMAREGAQVTGLDMGYEPLQVARLHALETGVKLEYVQETVENHAQQHPQHYDVVTCMEMLEHVPDPASVVRACAQLVKPGGHVFFSTINRNTKSWLMAVVGAEYLLKMVPKGTHDAKKFIRPSELIGWVDQTPLLERHIIGLHYNPITDHFKLGRNVDVNYMVHTQRDSE.

S-adenosyl-L-methionine is bound by residues Arg-44, Gly-64, Asp-85, and Met-129.

The protein belongs to the methyltransferase superfamily. UbiG/COQ3 family.

It catalyses the reaction a 3-demethylubiquinol + S-adenosyl-L-methionine = a ubiquinol + S-adenosyl-L-homocysteine + H(+). The enzyme catalyses a 3-(all-trans-polyprenyl)benzene-1,2-diol + S-adenosyl-L-methionine = a 2-methoxy-6-(all-trans-polyprenyl)phenol + S-adenosyl-L-homocysteine + H(+). It functions in the pathway cofactor biosynthesis; ubiquinone biosynthesis. Its function is as follows. O-methyltransferase that catalyzes the 2 O-methylation steps in the ubiquinone biosynthetic pathway. This is Ubiquinone biosynthesis O-methyltransferase from Yersinia pseudotuberculosis serotype O:1b (strain IP 31758).